The sequence spans 404 residues: MALRVTRNRLASTRAELGGKTCSVAGPTQKPRAALGEIGNVAVINKDVTKKTIKTEVAKKTKIPAKAEKIELPKAAVVPVKPAPEVQVTEVPDQAEPASPTPMETSGCESADLCQAFSDVILNTAIRDVDADDYDNPMLCSEYVKDIYKYLRQLEMEQSVKPNYLEGQEITGNMRAILIDWLVQVGLKFRLLQETMYMTVGIIDRFLQDHPVPKKQLQLVGVTAMFLASKYEEMYPPEISDFAYVTDRAYTTAQIRDMEMTILRVLKFQLGRPLPLQFLRRASKIYEVTAEQHTLAKYLLELSMVDYDMAHFSPSLVASAALALTLKVLDAGEWDVTLQHYMEYTAETLTPVMAHIAKNVVKVNNGQTKHMAIKGKYSTSKQMRIATISQLKSSVVKDLATQIS.

Belongs to the cyclin family. Cyclin AB subfamily. As to quaternary structure, interacts with the CDK1 protein kinase to form a serine/threonine kinase holoenzyme complex also known as maturation promoting factor (MPF). The cyclin subunit imparts substrate specificity to the complex.

Essential for the control of the cell cycle at the G2/M (mitosis) transition. The sequence is that of G2/mitotic-specific cyclin-B1 (ccnb1) from Oryzias latipes (Japanese rice fish).